A 318-amino-acid chain; its full sequence is Methionyl-tRNA formyltransferase (318 aa).

112-115 (SILP) provides a ligand contact to (6S)-5,6,7,8-tetrahydrofolate.

The protein belongs to the Fmt family.

It catalyses the reaction L-methionyl-tRNA(fMet) + (6R)-10-formyltetrahydrofolate = N-formyl-L-methionyl-tRNA(fMet) + (6S)-5,6,7,8-tetrahydrofolate + H(+). In terms of biological role, attaches a formyl group to the free amino group of methionyl-tRNA(fMet). The formyl group appears to play a dual role in the initiator identity of N-formylmethionyl-tRNA by promoting its recognition by IF2 and preventing the misappropriation of this tRNA by the elongation apparatus. The sequence is that of Methionyl-tRNA formyltransferase from Shewanella oneidensis (strain ATCC 700550 / JCM 31522 / CIP 106686 / LMG 19005 / NCIMB 14063 / MR-1).